The primary structure comprises 207 residues: Large ribosomal subunit protein uL4 (207 aa).

The segment at 56 to 76 (EVRGGGRKPWRQKGTGRARAG) is disordered. Over residues 60-71 (GGRKPWRQKGTG) the composition is skewed to basic residues.

It belongs to the universal ribosomal protein uL4 family. In terms of assembly, part of the 50S ribosomal subunit.

Its function is as follows. One of the primary rRNA binding proteins, this protein initially binds near the 5'-end of the 23S rRNA. It is important during the early stages of 50S assembly. It makes multiple contacts with different domains of the 23S rRNA in the assembled 50S subunit and ribosome. Functionally, forms part of the polypeptide exit tunnel. This is Large ribosomal subunit protein uL4 from Desulfitobacterium hafniense (strain Y51).